The primary structure comprises 773 residues: 5-methyltetrahydropteroyltriglutamate--homocysteine methyltransferase (773 aa).

5-methyltetrahydropteroyltri-L-glutamate contacts are provided by residues 16 to 19 (RELK) and K116. Residues 437 to 439 (IGS) and E490 contribute to the L-homocysteine site. Residues 437-439 (IGS) and E490 each bind L-methionine. 5-methyltetrahydropteroyltri-L-glutamate contacts are provided by residues 521 to 522 (RC) and W567. D605 provides a ligand contact to L-homocysteine. D605 is an L-methionine binding site. E611 serves as a coordination point for 5-methyltetrahydropteroyltri-L-glutamate. Positions 647, 649, and 671 each coordinate Zn(2+). H700 (proton donor) is an active-site residue. C732 contributes to the Zn(2+) binding site.

The protein belongs to the vitamin-B12 independent methionine synthase family. Zn(2+) is required as a cofactor.

It catalyses the reaction 5-methyltetrahydropteroyltri-L-glutamate + L-homocysteine = tetrahydropteroyltri-L-glutamate + L-methionine. Its pathway is amino-acid biosynthesis; L-methionine biosynthesis via de novo pathway; L-methionine from L-homocysteine (MetE route): step 1/1. Its function is as follows. Catalyzes the transfer of a methyl group from 5-methyltetrahydrofolate to homocysteine resulting in methionine formation. This Alkalilimnicola ehrlichii (strain ATCC BAA-1101 / DSM 17681 / MLHE-1) protein is 5-methyltetrahydropteroyltriglutamate--homocysteine methyltransferase.